A 180-amino-acid polypeptide reads, in one-letter code: Cytidylate kinase (180 aa).

7–15 lines the ATP pocket; it reads GLPGSGTTT.

This sequence belongs to the cytidylate kinase family. Type 2 subfamily.

It localises to the cytoplasm. It carries out the reaction CMP + ATP = CDP + ADP. It catalyses the reaction dCMP + ATP = dCDP + ADP. This chain is Cytidylate kinase, found in Methanosarcina barkeri (strain Fusaro / DSM 804).